Consider the following 474-residue polypeptide: Glutamate--tRNA ligase 1 (474 aa).

The 'HIGH' region signature appears at 11–21 (PSPTGFLHIGG). Over residues 113-133 (TARAEGRAPRYDGRWRDRDPS) the composition is skewed to basic and acidic residues. Residues 113 to 136 (TARAEGRAPRYDGRWRDRDPSEAP) are disordered. The short motif at 240-244 (KLSKR) is the 'KMSKS' region element. Lysine 243 lines the ATP pocket.

It belongs to the class-I aminoacyl-tRNA synthetase family. Glutamate--tRNA ligase type 1 subfamily. Monomer.

The protein localises to the cytoplasm. It carries out the reaction tRNA(Glu) + L-glutamate + ATP = L-glutamyl-tRNA(Glu) + AMP + diphosphate. Its function is as follows. Catalyzes the attachment of glutamate to tRNA(Glu) in a two-step reaction: glutamate is first activated by ATP to form Glu-AMP and then transferred to the acceptor end of tRNA(Glu). The chain is Glutamate--tRNA ligase 1 from Methylorubrum extorquens (strain PA1) (Methylobacterium extorquens).